Here is a 455-residue protein sequence, read N- to C-terminus: N-lysine methyltransferase setd6 (455 aa).

The SET domain occupies 38-266; sequence PKVYISTEGT…AGQELFNTYG (229 aa).

Belongs to the class V-like SAM-binding methyltransferase superfamily. Histone-lysine methyltransferase family. SETD6 subfamily.

It is found in the nucleus. Protein-lysine N-methyltransferase. In Xenopus laevis (African clawed frog), this protein is N-lysine methyltransferase setd6 (setd6).